Reading from the N-terminus, the 202-residue chain is 3-isopropylmalate dehydratase small subunit (202 aa).

Belongs to the LeuD family. LeuD type 1 subfamily. As to quaternary structure, heterodimer of LeuC and LeuD.

The enzyme catalyses (2R,3S)-3-isopropylmalate = (2S)-2-isopropylmalate. The protein operates within amino-acid biosynthesis; L-leucine biosynthesis; L-leucine from 3-methyl-2-oxobutanoate: step 2/4. Functionally, catalyzes the isomerization between 2-isopropylmalate and 3-isopropylmalate, via the formation of 2-isopropylmaleate. The sequence is that of 3-isopropylmalate dehydratase small subunit from Nocardia farcinica (strain IFM 10152).